The chain runs to 113 residues: Nitrogenase-stabilizing/protective protein NifW (113 aa).

It belongs to the NifW family. In terms of assembly, homotrimer; associates with NifD.

In terms of biological role, may protect the nitrogenase Fe-Mo protein from oxidative damage. The sequence is that of Nitrogenase-stabilizing/protective protein NifW from Polaromonas naphthalenivorans (strain CJ2).